The sequence spans 396 residues: Probable sugar efflux transporter (396 aa).

Transmembrane regions (helical) follow at residues 15-35 (VVTL…PVGL), 50-70 (VGIM…PFML), 81-101 (LICL…SWSF), 103-123 (VLVI…SITA), 136-156 (AQAL…GLPL), 170-190 (FFAI…LLPL), 209-229 (PALM…YTAY), 246-266 (FATA…VIFG), 275-295 (ALVS…LPAA), 299-319 (IHLG…GLGM), 333-353 (VAMA…ALVG), and 364-384 (MIGY…IIIF).

The protein belongs to the major facilitator superfamily. SotB (TC 2.A.1.2) family.

The protein resides in the cell inner membrane. Functionally, involved in the efflux of sugars. The physiological role may be the reduction of the intracellular concentration of toxic sugars or sugar metabolites. This chain is Probable sugar efflux transporter, found in Escherichia coli O157:H7 (strain EC4115 / EHEC).